Here is a 309-residue protein sequence, read N- to C-terminus: NAD kinase (309 aa).

The Proton acceptor role is filled by Asp-89. NAD(+) contacts are provided by residues 89–90, 163–164, His-174, Arg-191, Asp-193, and 204–209; these read DG, NE, and TAYALS.

It belongs to the NAD kinase family. It depends on a divalent metal cation as a cofactor.

It is found in the cytoplasm. The catalysed reaction is NAD(+) + ATP = ADP + NADP(+) + H(+). Functionally, involved in the regulation of the intracellular balance of NAD and NADP, and is a key enzyme in the biosynthesis of NADP. Catalyzes specifically the phosphorylation on 2'-hydroxyl of the adenosine moiety of NAD to yield NADP. This Shewanella baltica (strain OS185) protein is NAD kinase.